The primary structure comprises 153 residues: ORM1-like protein 1 (153 aa).

Residues 1–26 (MNVGVAHSEVNPNTRVMNSRGMWLTY) are Cytoplasmic-facing. The next 2 membrane-spanning stretches (helical) occupy residues 27–46 (ALGV…FSVP) and 47–64 (VAWT…YVFL). Residues 65-100 (HAVKGTPFETPDQGKARLLTHWEQLDYGVQFTSSRK) lie on the Cytoplasmic side of the membrane. Residues 101–121 (FFTISPIILYFLASFYTKYDT) form a helical membrane-spanning segment. The Extracellular portion of the chain corresponds to 122 to 123 (TH). The chain crosses the membrane as a helical span at residues 124–140 (FILNTASLLSVLIPKMP). The Cytoplasmic portion of the chain corresponds to 141–153 (QLHGVRIFGINKY).

It belongs to the ORM family. As to quaternary structure, ceramide-sensitive subunit of the serine palmitoyltransferase (SPT) complex, which is also composed of SPTLC1, SPTLC2/3 and SPTSSA/B.

Its subcellular location is the endoplasmic reticulum membrane. In terms of biological role, plays an essential role in the homeostatic regulation of sphingolipid de novo biosynthesis by modulating the activity of the serine palmitoyltransferase (SPT) in response to ceramide levels. When complexed to SPT, the binding of ceramides to its N-terminus stabilizes a conformation that block SPT substrate entry, hence preventing SPT catalytic activity. Through this mechanism, maintains ceramide levels at sufficient concentrations for the production of complex sphingolipids, but which prevents the accumulation of ceramides to levels that trigger apoptosis. In Bos taurus (Bovine), this protein is ORM1-like protein 1 (ORMDL1).